Reading from the N-terminus, the 100-residue chain is NADH-quinone oxidoreductase subunit K (100 aa).

A run of 3 helical transmembrane segments spans residues 4-24, 28-48, and 60-80; these read LQHG…GLLI, LLFM…AFVV, and VMYI…LALL.

This sequence belongs to the complex I subunit 4L family. NDH-1 is composed of 13 different subunits. Subunits NuoA, H, J, K, L, M, N constitute the membrane sector of the complex.

It is found in the cell inner membrane. The catalysed reaction is a quinone + NADH + 5 H(+)(in) = a quinol + NAD(+) + 4 H(+)(out). In terms of biological role, NDH-1 shuttles electrons from NADH, via FMN and iron-sulfur (Fe-S) centers, to quinones in the respiratory chain. The immediate electron acceptor for the enzyme in this species is believed to be ubiquinone. Couples the redox reaction to proton translocation (for every two electrons transferred, four hydrogen ions are translocated across the cytoplasmic membrane), and thus conserves the redox energy in a proton gradient. The protein is NADH-quinone oxidoreductase subunit K of Pectobacterium carotovorum subsp. carotovorum (strain PC1).